The primary structure comprises 256 residues: uncharacterized protein (256 aa).

The N-terminal stretch at 1 to 22 (MNNFRQCALCIGTSVLILLVSG) is a signal peptide. Cysteine 23 carries N-palmitoyl cysteine lipidation. Residue cysteine 23 is the site of S-diacylglycerol cysteine attachment.

The protein belongs to the staphylococcal tandem lipoprotein family.

The protein resides in the cell membrane. This is an uncharacterized protein from Staphylococcus aureus (strain bovine RF122 / ET3-1).